The following is a 77-amino-acid chain: Acyl carrier protein (77 aa).

In terms of domain architecture, Carrier spans 2-77; the sequence is STIEERVKKV…EAIDYVVAHQ (76 aa). At serine 37 the chain carries O-(pantetheine 4'-phosphoryl)serine.

This sequence belongs to the acyl carrier protein (ACP) family. In terms of processing, 4'-phosphopantetheine is transferred from CoA to a specific serine of apo-ACP by AcpS. This modification is essential for activity because fatty acids are bound in thioester linkage to the sulfhydryl of the prosthetic group.

It localises to the cytoplasm. It functions in the pathway lipid metabolism; fatty acid biosynthesis. Its function is as follows. Carrier of the growing fatty acid chain in fatty acid biosynthesis. This Chromohalobacter salexigens (strain ATCC BAA-138 / DSM 3043 / CIP 106854 / NCIMB 13768 / 1H11) protein is Acyl carrier protein.